The following is a 1100-amino-acid chain: DNA-directed RNA polymerase subunit beta (1100 aa).

Residues 1064-1100 (YEEDKEVDLMADVNQRRTPSRPTYESMSVGDIDDDDD) are disordered. Positions 1079–1089 (RRTPSRPTYES) are enriched in polar residues.

Belongs to the RNA polymerase beta chain family. In terms of assembly, in cyanobacteria the RNAP catalytic core is composed of 2 alpha, 1 beta, 1 beta', 1 gamma and 1 omega subunit. When a sigma factor is associated with the core the holoenzyme is formed, which can initiate transcription.

It carries out the reaction RNA(n) + a ribonucleoside 5'-triphosphate = RNA(n+1) + diphosphate. In terms of biological role, DNA-dependent RNA polymerase catalyzes the transcription of DNA into RNA using the four ribonucleoside triphosphates as substrates. The protein is DNA-directed RNA polymerase subunit beta of Synechococcus elongatus (strain ATCC 33912 / PCC 7942 / FACHB-805) (Anacystis nidulans R2).